Reading from the N-terminus, the 112-residue chain is Small ribosomal subunit protein bS16 (112 aa).

This sequence belongs to the bacterial ribosomal protein bS16 family.

The polypeptide is Small ribosomal subunit protein bS16 (Karelsulcia muelleri (strain GWSS) (Sulcia muelleri)).